The sequence spans 397 residues: MGLSWSPRPPLLMILLLVLSLWLPLGAGNSLATENRFVNSCTQARKKCEANPACKAAYQHLGSCTSSLSRPLPLEESAMSADCLEAAEQLRNSSLIDCRCHRRMKHQATCLDIYWTVHPARSLGDYELDVSPYEDTVTSKPWKMNLSKLNMLKPDSDLCLKFAMLCTLHDKCDRLRKAYGEACSGIRCQRHLCLAQLRSFFEKAAESHAQGLLLCPCAPEDAGCGERRRNTIAPSCALPSVTPNCLDLRSFCRADPLCRSRLMDFQTHCHPMDILGTCATEQSRCLRAYLGLIGTAMTPNFISKVNTTVALSCTCRGSGNLQDECEQLERSFSQNPCLVEAIAAKMRFHRQLFSQDWADSTFSVVQQQNSNPALRLQPRLPILSFSILPLILLQTLW.

Positions 1-28 (MGLSWSPRPPLLMILLLVLSLWLPLGAG) are cleaved as a signal peptide. Cys-48 and Cys-54 are oxidised to a cystine. Residues Asn-92 and Asn-145 are each glycosylated (N-linked (GlcNAc...) asparagine). Disulfide bonds link Cys-159–Cys-215, Cys-166–Cys-172, Cys-183–Cys-193, Cys-188–Cys-236, Cys-217–Cys-224, Cys-245–Cys-313, Cys-252–Cys-258, Cys-269–Cys-285, Cys-278–Cys-337, and Cys-315–Cys-325. The N-linked (GlcNAc...) asparagine glycan is linked to Asn-306. Asn-371 carries GPI-anchor amidated asparagine lipidation. A propeptide spans 372–397 (PALRLQPRLPILSFSILPLILLQTLW) (removed in mature form).

Belongs to the GDNFR family. Interacts with ARTN ligand and RET: forms a 2:2:2 ternary complex composed of ARTN ligand, GFRA3 and RET receptor. Interacts with SORL1.

It localises to the cell membrane. Receptor for artemin (ARTN), a growth factor that supports the survival of sensory and sympathetic peripheral neurons. ARTN-binding leads to autophosphorylation and activation of the RET receptor. The polypeptide is GDNF family receptor alpha-3 (Gfra3) (Mus musculus (Mouse)).